Reading from the N-terminus, the 157-residue chain is Monooxygenase CPUR_05417 (157 aa).

The protein belongs to the avfA family.

It functions in the pathway secondary metabolite biosynthesis. Functionally, monooxygenase; part of the ergochrome gene cluster responsible for the typical purple-black color of the ergot sclerotia. The ergochrome gene cluster produces several ergot pigments including the yellow ergochrome secalonic acid and its derivatives, as well as the red anthraquinones endocrocin and clavorubin. The pathway begins with the synthesis of atrochrysone thioester by the polyketide synthase (PKS) CPUR_05437. The atrochrysone carboxyl ACP thioesterase CPUR_05436 then breaks the thioester bond and releases the atrochrysone carboxylic acid from CPUR_05437. The atrochrysone carboxylic acid is then converted to atrochrysone which is further transformed into emodin anthrone. The next step is performed by the anthrone oxygenase CPUR_05434 that catalyzes the oxidation of emodinanthrone to emodin. Emodin is further modified to yield monodictyphenone via several steps involving CPUR_05427, CPUR_05428, CPUR_05429 and CPUR_05430. The short chain dehydrogenase/reductase CPUR_05418 then catalyzes the C-5 ketoreduction to give the xanthone skeleton of the monomeric units. Ergochromes formation requires further dimerization steps of different xanthone units, probably catalyzed by the cytochrome P450 monooxygenase CPUR_05419. CPUR_05425, CPUR_05426 and CPUR_05431 are unique to Claviceps, thus it is likely that they are involved in further modification of xanthone units or in their dimerization. The yellow ergochromes and the red anthraquinone pigments endocrocin and clavorubin are products from the same PKS derived precursors and the latter are likely shunt products in the pathway of xanthone biosynthesis. It is proposed that atrochrysone carboxylic acid released from the PKS CPUR_05437 can also be converted to endocrocin anthrone which is further oxidized into endocrocin by CPUR_05435. Endocrocin could be then modified to clavorubin, possibly by CPUR_05423 and CPUR_05431. Clavorubin is the principal anthraquinone metabolite produced by the cluster with a much higher yield compared to endocrocin. This Claviceps purpurea (strain 20.1) (Ergot fungus) protein is Monooxygenase CPUR_05417.